The following is a 216-amino-acid chain: ATP phosphoribosyltransferase (216 aa).

It belongs to the ATP phosphoribosyltransferase family. Short subfamily. As to quaternary structure, heteromultimer composed of HisG and HisZ subunits.

The protein localises to the cytoplasm. The catalysed reaction is 1-(5-phospho-beta-D-ribosyl)-ATP + diphosphate = 5-phospho-alpha-D-ribose 1-diphosphate + ATP. It participates in amino-acid biosynthesis; L-histidine biosynthesis; L-histidine from 5-phospho-alpha-D-ribose 1-diphosphate: step 1/9. In terms of biological role, catalyzes the condensation of ATP and 5-phosphoribose 1-diphosphate to form N'-(5'-phosphoribosyl)-ATP (PR-ATP). Has a crucial role in the pathway because the rate of histidine biosynthesis seems to be controlled primarily by regulation of HisG enzymatic activity. In Nitrosomonas eutropha (strain DSM 101675 / C91 / Nm57), this protein is ATP phosphoribosyltransferase.